The following is a 314-amino-acid chain: Acetyl-coenzyme A carboxylase carboxyl transferase subunit beta (314 aa).

The CoA carboxyltransferase N-terminal domain occupies 24 to 293; sequence LWIKCPDTGQ…IDAAPEPSPA (270 aa). Positions 283-314 are disordered; it reads EIDAAPEPSPAAEEPAEPMPAPEAAAPSAPPA. Composition is skewed to low complexity over residues 284 to 295 and 304 to 314; these read IDAAPEPSPAAE and PEAAAPSAPPA.

The protein belongs to the AccD/PCCB family. As to quaternary structure, acetyl-CoA carboxylase is a heterohexamer composed of biotin carboxyl carrier protein (AccB), biotin carboxylase (AccC) and two subunits each of ACCase subunit alpha (AccA) and ACCase subunit beta (AccD).

Its subcellular location is the cytoplasm. The enzyme catalyses N(6)-carboxybiotinyl-L-lysyl-[protein] + acetyl-CoA = N(6)-biotinyl-L-lysyl-[protein] + malonyl-CoA. Its pathway is lipid metabolism; malonyl-CoA biosynthesis; malonyl-CoA from acetyl-CoA: step 1/1. Its function is as follows. Component of the acetyl coenzyme A carboxylase (ACC) complex. Biotin carboxylase (BC) catalyzes the carboxylation of biotin on its carrier protein (BCCP) and then the CO(2) group is transferred by the transcarboxylase to acetyl-CoA to form malonyl-CoA. The protein is Acetyl-coenzyme A carboxylase carboxyl transferase subunit beta of Nitrobacter hamburgensis (strain DSM 10229 / NCIMB 13809 / X14).